The sequence spans 72 residues: UPF0154 protein RBAM_017710 (72 aa).

Residues 4 to 24 (WVGILVGVVALLIGVALGFFI) form a helical membrane-spanning segment.

The protein belongs to the UPF0154 family.

It localises to the cell membrane. This chain is UPF0154 protein RBAM_017710, found in Bacillus velezensis (strain DSM 23117 / BGSC 10A6 / LMG 26770 / FZB42) (Bacillus amyloliquefaciens subsp. plantarum).